Here is a 2225-residue protein sequence, read N- to C-terminus: Multifunctional protein CAD (2225 aa).

Ala2 is subject to N-acetylalanine. Positions 2 to 365 (AALVLEDGSV…TVKEATAGNP (364 aa)) are GATase (Glutamine amidotransferase). 3 residues coordinate L-glutamine: Ser44, Gly222, and Gly224. The Glutamine amidotransferase type-1 domain occupies 177 to 363 (RILALDCGLK…LETVKEATAG (187 aa)). The active-site Nucleophile; for GATase activity is Cys252. L-glutamine contacts are provided by Leu253, Gln256, Asn294, Gly296, and Phe297. Catalysis depends on for GATase activity residues His336 and Glu338. Residues 366 to 394 (GGQTVRERLTERLCPPGIPTPGSGLPPPR) are linker. Residues 395 to 933 (KVLILGSGGL…TTHDLTFRTP (539 aa)) form a CPSase A region. The tract at residues 395-1455 (KVLILGSGGL…APPLKVHVDC (1061 aa)) is CPSase (Carbamoyl phosphate synthase). A Phosphothreonine; by MAPK1 modification is found at Thr456. Residues Arg515, Arg555, Gly561, Gly562, Lys592, Glu599, Gly625, Ile626, His627, Gln668, and Glu682 each contribute to the ATP site. Residues 519–711 (AARMAEIGEH…LAYVAAKLAL (193 aa)) form the ATP-grasp 1 domain. Mg(2+) is bound by residues Gln668, Glu682, and Asn684. The Mn(2+) site is built by Gln668, Glu682, and Asn684. Position 747 is an N6-acetyllysine (Lys747). Positions 934–1455 (HVLVLGSGVY…APPLKVHVDC (522 aa)) are CPSase B. Ser1038 is modified (phosphoserine). Residues 1052–1243 (SRLLDTIGIS…LVALATRVIM (192 aa)) form the ATP-grasp 2 domain. 10 residues coordinate ATP: Arg1088, Lys1127, Ile1129, Glu1134, Gly1159, Val1160, His1161, Ser1162, Gln1202, and Glu1214. Residues Gln1202, Glu1214, and Asn1216 each coordinate Mg(2+). Gln1202, Glu1214, and Asn1216 together coordinate Mn(2+). An MGS-like domain is found at 1308-1462 (FKIPKKNILL…VDCMTSQKLV (155 aa)). Residue Ser1406 is modified to Phosphoserine; by PKA. N6-acetyllysine is present on Lys1411. The segment at 1456–1788 (MTSQKLVRLP…VKGTVRRVVL (333 aa)) is DHOase (dihydroorotase). Positions 1471 and 1473 each coordinate Zn(2+). 2 residues coordinate (S)-dihydroorotate: Arg1475 and Asn1505. Zn(2+)-binding residues include Lys1556, His1590, Cys1613, His1614, and Glu1637. Position 1556 is an N6-carboxylysine (Lys1556). A (S)-dihydroorotate-binding site is contributed by Arg1661. Asp1686 provides a ligand contact to Zn(2+). Asp1686 serves as the catalytic For DHOase activity. (S)-dihydroorotate-binding residues include His1690 and Pro1702. The tract at residues 1789–1917 (RGEVAYIDGQ…GLLHPQTSPL (129 aa)) is linker. The disordered stretch occupies residues 1811–1899 (KWPQGAVPQL…YPPPPVPRQA (89 aa)). Positions 1825–1834 (PATSEMTTTP) are enriched in polar residues. The residue at position 1859 (Ser1859) is a Phosphoserine; by RPS6KB1 and PKA. The span at 1866 to 1878 (EEPKEKSSRKVAE) shows a compositional bias: basic and acidic residues. Phosphoserine; by PKC; in vitro is present on Ser1873. At Thr1884 the chain carries Phosphothreonine. 2 positions are modified to phosphoserine: Ser1900 and Ser1938. Residues 1918–2225 (LHSLVGQHIL…ALLATVLGRF (308 aa)) are ATCase (Aspartate transcarbamylase). Carbamoyl phosphate contacts are provided by Arg1975 and Thr1976. Lys2003 contributes to the L-aspartate binding site. Arg2024, His2052, and Gln2055 together coordinate carbamoyl phosphate. L-aspartate contacts are provided by Arg2085 and Arg2146. Carbamoyl phosphate is bound by residues Met2185 and Pro2186.

In the N-terminal section; belongs to the CarA family. It in the 2nd section; belongs to the CarB family. The protein in the 3rd section; belongs to the metallo-dependent hydrolases superfamily. DHOase family. CAD subfamily. This sequence in the C-terminal section; belongs to the aspartate/ornithine carbamoyltransferase superfamily. ATCase family. Homohexamer. Interacts with CIPC. The cofactor is Zn(2+). Mg(2+) serves as cofactor. Mn(2+) is required as a cofactor. In terms of processing, activated by MAP kinase (Erk1/2) phosphorylation just prior to the S phase of the cell cycle, when the demand for pyrimidine nucleotides is greatest, and down-regulated as the cells emerge from S phase by protein kinase A (PKA) phosphorylation. Phosphorylation at Ser-1859 by RPS6KB1 downstream of MTOR promotes oligomerization and stimulates dihydroorotase activity. Phosphorylation at Ser-1406 reduces sensitivity to feedback inhibition by UTP.

The protein localises to the cytoplasm. It localises to the nucleus. It carries out the reaction hydrogencarbonate + L-glutamine + 2 ATP + H2O = carbamoyl phosphate + L-glutamate + 2 ADP + phosphate + 2 H(+). The catalysed reaction is L-glutamine + H2O = L-glutamate + NH4(+). The enzyme catalyses hydrogencarbonate + NH4(+) + 2 ATP = carbamoyl phosphate + 2 ADP + phosphate + 2 H(+). It catalyses the reaction carbamoyl phosphate + L-aspartate = N-carbamoyl-L-aspartate + phosphate + H(+). It carries out the reaction (S)-dihydroorotate + H2O = N-carbamoyl-L-aspartate + H(+). It participates in pyrimidine metabolism; UMP biosynthesis via de novo pathway; (S)-dihydroorotate from bicarbonate: step 1/3. The protein operates within pyrimidine metabolism; UMP biosynthesis via de novo pathway; (S)-dihydroorotate from bicarbonate: step 2/3. It functions in the pathway pyrimidine metabolism; UMP biosynthesis via de novo pathway; (S)-dihydroorotate from bicarbonate: step 3/3. Its activity is regulated as follows. Allosterically regulated and controlled by phosphorylation. 5-phosphoribose 1-diphosphate (PRPP) is an activator while UMP and UTP are inhibitors of the CPSase reaction. Functionally, multifunctional protein that encodes the first 3 enzymatic activities of the de novo pyrimidine pathway: carbamoylphosphate synthetase (CPSase; EC 6.3.5.5), aspartate transcarbamylase (ATCase; EC 2.1.3.2) and dihydroorotase (DHOase; EC 3.5.2.3). The CPSase-function is accomplished in 2 steps, by a glutamine-dependent amidotransferase activity (GATase) that binds and cleaves glutamine to produce ammonia, followed by an ammonium-dependent carbamoyl phosphate synthetase, which reacts with the ammonia, hydrogencarbonate and ATP to form carbamoyl phosphate. The endogenously produced carbamoyl phosphate is sequestered and channeled to the ATCase active site. ATCase then catalyzes the formation of carbamoyl-L-aspartate from L-aspartate and carbamoyl phosphate. In the last step, DHOase catalyzes the cyclization of carbamoyl aspartate to dihydroorotate. This is Multifunctional protein CAD from Homo sapiens (Human).